Reading from the N-terminus, the 137-residue chain is Phosphoinositide-interacting protein (137 aa).

Helical transmembrane passes span 56-76 and 94-114; these read IVIM…TCLA and PGFL…VPII.

As to quaternary structure, interacts with TRPV1.

The protein resides in the membrane. Regulatory subunit of TRPV1, a molecular sensor of noxious heat and capsaicin. Positively regulates TRPV1 channel activity via phosphatidylinositol 4,5-bisphosphate (PIP2). Binds various phosphoinositide, including phosphatidylinositol 4,5-bisphosphate (PIP2), but not phosphatidylinositol (PI). This is Phosphoinositide-interacting protein (PIRT) from Homo sapiens (Human).